The following is a 415-amino-acid chain: Multifunctional CCA protein (415 aa).

ATP-binding residues include glycine 8 and arginine 11. CTP-binding residues include glycine 8 and arginine 11. 2 residues coordinate Mg(2+): aspartate 21 and aspartate 23. ATP is bound by residues arginine 91, arginine 143, and arginine 146. CTP is bound by residues arginine 91, arginine 143, and arginine 146. Positions 232-333 (TGVHVMMVID…TRLLERCDAL (102 aa)) constitute an HD domain.

It belongs to the tRNA nucleotidyltransferase/poly(A) polymerase family. Bacterial CCA-adding enzyme type 1 subfamily. Monomer. Can also form homodimers and oligomers. Mg(2+) serves as cofactor. It depends on Ni(2+) as a cofactor.

It catalyses the reaction a tRNA precursor + 2 CTP + ATP = a tRNA with a 3' CCA end + 3 diphosphate. It carries out the reaction a tRNA with a 3' CCA end + 2 CTP + ATP = a tRNA with a 3' CCACCA end + 3 diphosphate. In terms of biological role, catalyzes the addition and repair of the essential 3'-terminal CCA sequence in tRNAs without using a nucleic acid template. Adds these three nucleotides in the order of C, C, and A to the tRNA nucleotide-73, using CTP and ATP as substrates and producing inorganic pyrophosphate. tRNA 3'-terminal CCA addition is required both for tRNA processing and repair. Also involved in tRNA surveillance by mediating tandem CCA addition to generate a CCACCA at the 3' terminus of unstable tRNAs. While stable tRNAs receive only 3'-terminal CCA, unstable tRNAs are marked with CCACCA and rapidly degraded. This is Multifunctional CCA protein from Cupriavidus pinatubonensis (strain JMP 134 / LMG 1197) (Cupriavidus necator (strain JMP 134)).